The primary structure comprises 766 residues: BMP/retinoic acid-inducible neural-specific protein 3 (766 aa).

The first 33 residues, 1–33 (MIWRRRAGAELSSLMALWEWIVLSLHCWVLAVA), serve as a signal peptide directing secretion. Residues 74-264 (RYKIYREFGR…FVQAALSYIA (191 aa)) form the MACPF domain. N-linked (GlcNAc...) asparagine glycans are attached at residues Asn168, Asn337, Asn456, Asn562, Asn609, and Asn641.

It belongs to the BRINP family. Expressed in olfactory bulb, cerebellum and neuronal layers in hippocampus.

Its subcellular location is the secreted. The protein resides in the mitochondrion. Inhibits neuronal cell proliferation by negative regulation of the cell cycle transition. Promotes pituitary gonadotrope cell proliferation, migration and invasion, when overexpressed. May play a role in cell pituitary tumor development. This Rattus norvegicus (Rat) protein is BMP/retinoic acid-inducible neural-specific protein 3 (Brinp3).